Here is a 1400-residue protein sequence, read N- to C-terminus: DNA-directed RNA polymerase subunit beta' (1400 aa).

The Zn(2+) site is built by C71, C73, C86, and C89. D462, D464, and D466 together coordinate Mg(2+). Zn(2+) contacts are provided by C810, C884, C891, and C894.

It belongs to the RNA polymerase beta' chain family. In terms of assembly, the RNAP catalytic core consists of 2 alpha, 1 beta, 1 beta' and 1 omega subunit. When a sigma factor is associated with the core the holoenzyme is formed, which can initiate transcription. Mg(2+) is required as a cofactor. Zn(2+) serves as cofactor.

The catalysed reaction is RNA(n) + a ribonucleoside 5'-triphosphate = RNA(n+1) + diphosphate. Functionally, DNA-dependent RNA polymerase catalyzes the transcription of DNA into RNA using the four ribonucleoside triphosphates as substrates. In Rhodopseudomonas palustris (strain BisA53), this protein is DNA-directed RNA polymerase subunit beta'.